Reading from the N-terminus, the 251-residue chain is Triosephosphate isomerase (251 aa).

Position 9–11 (9–11) interacts with substrate; it reads NWK. Catalysis depends on H95, which acts as the Electrophile. The active-site Proton acceptor is E167. Substrate contacts are provided by residues G173, S213, and 234–235; that span reads GG.

Belongs to the triosephosphate isomerase family. In terms of assembly, homodimer.

Its subcellular location is the cytoplasm. The enzyme catalyses D-glyceraldehyde 3-phosphate = dihydroxyacetone phosphate. The protein operates within carbohydrate biosynthesis; gluconeogenesis. It functions in the pathway carbohydrate degradation; glycolysis; D-glyceraldehyde 3-phosphate from glycerone phosphate: step 1/1. In terms of biological role, involved in the gluconeogenesis. Catalyzes stereospecifically the conversion of dihydroxyacetone phosphate (DHAP) to D-glyceraldehyde-3-phosphate (G3P). This chain is Triosephosphate isomerase, found in Carboxydothermus hydrogenoformans (strain ATCC BAA-161 / DSM 6008 / Z-2901).